Consider the following 107-residue polypeptide: Small integral membrane protein 19 (107 aa).

The helical transmembrane segment at 25–43 (ATNVYLIVILVSFGLFMYA) threads the bilayer.

The protein belongs to the SMIM19 family.

It localises to the membrane. This Homo sapiens (Human) protein is Small integral membrane protein 19 (SMIM19).